Reading from the N-terminus, the 93-residue chain is Acyl carrier protein AcpXL (93 aa).

One can recognise a Carrier domain in the interval 2–88 (SSTFDKVADI…NLCAKIDELV (87 aa)). O-(pantetheine 4'-phosphoryl)serine is present on S37.

In terms of processing, 4'-phosphopantetheine is transferred from CoA to a specific serine of apo-ACP by AcpS. This modification is essential for activity because fatty acids are bound in thioester linkage to the sulfhydryl of the prosthetic group.

The protein resides in the cytoplasm. It functions in the pathway glycolipid biosynthesis; KDO(2)-lipid A biosynthesis. In terms of biological role, carrier of the growing fatty acid chain in fatty acid biosynthesis. Is involved in the transfer of long hydroxylated fatty acids to lipid A. The protein is Acyl carrier protein AcpXL (acpXL) of Brucella melitensis biotype 1 (strain ATCC 23456 / CCUG 17765 / NCTC 10094 / 16M).